The sequence spans 568 residues: Mannitol 2-dehydrogenase (568 aa).

Residue 109–120 (IVHVGVGGFHRA) coordinates NAD(+).

Belongs to the mannitol dehydrogenase family. As to quaternary structure, monomer.

It carries out the reaction D-mannitol + NAD(+) = D-fructose + NADH + H(+). Functionally, catalyzes the NAD(H)-dependent interconversion of D-fructose and D-mannitol in the mannitol metabolic pathway. This is Mannitol 2-dehydrogenase from Phaeosphaeria nodorum (strain SN15 / ATCC MYA-4574 / FGSC 10173) (Glume blotch fungus).